We begin with the raw amino-acid sequence, 350 residues long: MFS transporter OpS2 (350 aa).

A run of 8 helical transmembrane segments spans residues 3–23 (FLAGGASASVAAVGAGTVADL), 34–54 (GYFFLGPMLGPLVSPIIGGIL), 65–85 (WGAVVYGGLVWLSMIFLLPET), 141–161 (FMTCYYASISFACYYILNLAI), 174–194 (AIILGLLYIPSALGSIVASVV), 227–247 (MCENAWIPAFVFPAALLVFGW), 253–273 (IFWFAPIVVTFFFGLGNSLIF), and 312–332 (PLLGAIGTQWLFTGLAVICWA).

It belongs to the major facilitator superfamily.

The protein localises to the cell membrane. Functionally, MFS transporter; part of the gene cluster that mediates the biosynthesis of the bibenzoquinone oosporein, a metabolite required for fungal virulence that acts by evading host immunity to facilitate fungal multiplication in insects. The function of this putative MFS transporter remains unclear since its deletion leads to increased oosporein production. The protein is MFS transporter OpS2 of Beauveria bassiana (strain ARSEF 2860) (White muscardine disease fungus).